The following is a 121-amino-acid chain: Large ribosomal subunit protein bL12 (121 aa).

This sequence belongs to the bacterial ribosomal protein bL12 family. In terms of assembly, homodimer. Part of the ribosomal stalk of the 50S ribosomal subunit. Forms a multimeric L10(L12)X complex, where L10 forms an elongated spine to which 2 to 4 L12 dimers bind in a sequential fashion. Binds GTP-bound translation factors.

Forms part of the ribosomal stalk which helps the ribosome interact with GTP-bound translation factors. Is thus essential for accurate translation. This chain is Large ribosomal subunit protein bL12, found in Salmonella agona (strain SL483).